Consider the following 459-residue polypeptide: Bifunctional protein GlmU (459 aa).

A pyrophosphorylase region spans residues 1–229 (MTNYAIILAA…FDESLGVNDR (229 aa)). UDP-N-acetyl-alpha-D-glucosamine contacts are provided by residues 8 to 11 (LAAG), lysine 22, glutamine 72, and 77 to 78 (GT). A Mg(2+)-binding site is contributed by aspartate 102. Residues glycine 139, glutamate 154, asparagine 169, and asparagine 227 each coordinate UDP-N-acetyl-alpha-D-glucosamine. Asparagine 227 contributes to the Mg(2+) binding site. The tract at residues 230–250 (VALATAESVMRRRINQQHMVN) is linker. The N-acetyltransferase stretch occupies residues 251 to 459 (GVSFVNPHAT…KRLPHHPQNK (209 aa)). 2 residues coordinate UDP-N-acetyl-alpha-D-glucosamine: arginine 332 and lysine 350. The active-site Proton acceptor is histidine 362. 2 residues coordinate UDP-N-acetyl-alpha-D-glucosamine: tyrosine 365 and asparagine 376. Acetyl-CoA-binding positions include alanine 379, 385–386 (NY), serine 404, alanine 422, and arginine 439.

The protein in the N-terminal section; belongs to the N-acetylglucosamine-1-phosphate uridyltransferase family. It in the C-terminal section; belongs to the transferase hexapeptide repeat family. Homotrimer. Requires Mg(2+) as cofactor.

It is found in the cytoplasm. The catalysed reaction is alpha-D-glucosamine 1-phosphate + acetyl-CoA = N-acetyl-alpha-D-glucosamine 1-phosphate + CoA + H(+). It catalyses the reaction N-acetyl-alpha-D-glucosamine 1-phosphate + UTP + H(+) = UDP-N-acetyl-alpha-D-glucosamine + diphosphate. The protein operates within nucleotide-sugar biosynthesis; UDP-N-acetyl-alpha-D-glucosamine biosynthesis; N-acetyl-alpha-D-glucosamine 1-phosphate from alpha-D-glucosamine 6-phosphate (route II): step 2/2. It functions in the pathway nucleotide-sugar biosynthesis; UDP-N-acetyl-alpha-D-glucosamine biosynthesis; UDP-N-acetyl-alpha-D-glucosamine from N-acetyl-alpha-D-glucosamine 1-phosphate: step 1/1. It participates in bacterial outer membrane biogenesis; LPS lipid A biosynthesis. Catalyzes the last two sequential reactions in the de novo biosynthetic pathway for UDP-N-acetylglucosamine (UDP-GlcNAc). The C-terminal domain catalyzes the transfer of acetyl group from acetyl coenzyme A to glucosamine-1-phosphate (GlcN-1-P) to produce N-acetylglucosamine-1-phosphate (GlcNAc-1-P), which is converted into UDP-GlcNAc by the transfer of uridine 5-monophosphate (from uridine 5-triphosphate), a reaction catalyzed by the N-terminal domain. The chain is Bifunctional protein GlmU from Streptococcus sanguinis (strain SK36).